Here is a 600-residue protein sequence, read N- to C-terminus: Nisin transport ATP-binding protein NisT (600 aa).

The next 5 membrane-spanning stretches (helical) occupy residues A34–I54, L69–L89, A147–T167, W168–L188, and I260–S280. The region spanning A34–N317 is the ABC transmembrane type-1 domain. Residues V352–S592 enclose the ABC transporter domain. G386 to S393 lines the ATP pocket.

It belongs to the ABC transporter superfamily. Nisin exporter (TC 3.A.1.111.3) family.

It localises to the cell membrane. Its function is as follows. Probably implicated in the export process of the lantibiotic nisin. The chain is Nisin transport ATP-binding protein NisT (nisT) from Lactococcus lactis subsp. lactis (Streptococcus lactis).